A 252-amino-acid chain; its full sequence is 2-succinyl-6-hydroxy-2,4-cyclohexadiene-1-carboxylate synthase (252 aa).

It belongs to the AB hydrolase superfamily. MenH family. As to quaternary structure, monomer.

It catalyses the reaction 5-enolpyruvoyl-6-hydroxy-2-succinyl-cyclohex-3-ene-1-carboxylate = (1R,6R)-6-hydroxy-2-succinyl-cyclohexa-2,4-diene-1-carboxylate + pyruvate. The protein operates within quinol/quinone metabolism; 1,4-dihydroxy-2-naphthoate biosynthesis; 1,4-dihydroxy-2-naphthoate from chorismate: step 3/7. Its pathway is quinol/quinone metabolism; menaquinone biosynthesis. Its function is as follows. Catalyzes a proton abstraction reaction that results in 2,5-elimination of pyruvate from 2-succinyl-5-enolpyruvyl-6-hydroxy-3-cyclohexene-1-carboxylate (SEPHCHC) and the formation of 2-succinyl-6-hydroxy-2,4-cyclohexadiene-1-carboxylate (SHCHC). The chain is 2-succinyl-6-hydroxy-2,4-cyclohexadiene-1-carboxylate synthase from Shigella dysenteriae serotype 1 (strain Sd197).